The primary structure comprises 420 residues: Type II methyltransferase M.NmeDI (420 aa).

Positions 1-23 are disordered; that stretch reads MMSLKIQPAVPKKSDKPSATNRD. The 356-residue stretch at 56–411 folds into the SAM-dependent MTase C5-type domain; that stretch reads TLIFSFFSGA…MTLKSYLENH (356 aa). Cysteine 148 is an active-site residue.

Belongs to the class I-like SAM-binding methyltransferase superfamily. C5-methyltransferase family.

It carries out the reaction a 2'-deoxycytidine in DNA + S-adenosyl-L-methionine = a 5-methyl-2'-deoxycytidine in DNA + S-adenosyl-L-homocysteine + H(+). Functionally, a methylase that recognizes the double-stranded sequence 5'-RCCGGB-3', methylates C-2 on both strands, and protects the DNA from cleavage by the NmeDI endonuclease. The polypeptide is Type II methyltransferase M.NmeDI (nmeDIMP) (Neisseria meningitidis serogroup C).